The sequence spans 536 residues: 1,4-beta-D-glucan cellobiohydrolase B (536 aa).

A signal peptide spans 1 to 21 (MSSFQIYRAALLLSILATANA). Residues 22-458 (QQVGTYTTET…SNIKFGPIGS (437 aa)) form a catalytic region. Residue Glu-233 is the Nucleophile of the active site. The Proton donor role is filled by Glu-238. N-linked (GlcNAc...) asparagine glycosylation is found at Asn-351 and Asn-414. The tract at residues 459–500 (TYSSGSSSGSGSSSSSSSTTTKATSTTLKTTSTTSSGSSSTS) is ser/Thr-rich linker. The segment at 464–499 (SSSGSGSSSSSSSTTTKATSTTLKTTSTTSSGSSST) is disordered. In terms of domain architecture, CBM1 spans 500–536 (SAAQAYGQCGGQGWTGPTTCVSGYTCTYENAYYSQCL). Cystine bridges form between Cys-508/Cys-525 and Cys-519/Cys-535.

It belongs to the glycosyl hydrolase 7 (cellulase C) family.

The protein localises to the secreted. It carries out the reaction Hydrolysis of (1-&gt;4)-beta-D-glucosidic linkages in cellulose and cellotetraose, releasing cellobiose from the non-reducing ends of the chains.. The biological conversion of cellulose to glucose generally requires three types of hydrolytic enzymes: (1) Endoglucanases which cut internal beta-1,4-glucosidic bonds; (2) Exocellobiohydrolases that cut the disaccharide cellobiose from the non-reducing end of the cellulose polymer chain; (3) Beta-1,4-glucosidases which hydrolyze the cellobiose and other short cello-oligosaccharides to glucose. The sequence is that of 1,4-beta-D-glucan cellobiohydrolase B (cbhB) from Aspergillus niger.